The chain runs to 129 residues: Large ribosomal subunit protein bL20 (129 aa).

Belongs to the bacterial ribosomal protein bL20 family.

Its function is as follows. Binds directly to 23S ribosomal RNA and is necessary for the in vitro assembly process of the 50S ribosomal subunit. It is not involved in the protein synthesizing functions of that subunit. This Mycobacterium leprae (strain Br4923) protein is Large ribosomal subunit protein bL20.